Reading from the N-terminus, the 224-residue chain is Propanediol dehydratase medium subunit (224 aa).

A targets protein to the BMC region spans residues 1–18 (MEINEKLLRQIIEDVLSE).

Belongs to the diol/glycerol dehydratase medium subunit family. The propanediol dehydratase enzyme is a heterotrimeric complex composed of a large (PduC), a medium (PduD) and a small (PduE) subunit. Requires adenosylcob(III)alamin as cofactor.

Its subcellular location is the bacterial microcompartment. The catalysed reaction is propane-1,2-diol = propanal + H2O. It participates in polyol metabolism; 1,2-propanediol degradation. Its function is as follows. Part of the PduCDE complex that catalyzes the dehydration of 1,2-propanediol (1,2-PD) to propionaldehyde. This subunit is directly targeted to the bacterial microcompartment (BMC). In terms of biological role, expression of a cosmid containing the full 21-gene pdu operon in E.coli allows E.coli to grow on 1,2-propanediol (1,2-PD) with the appearance of BMCs in its cytoplasm. Functionally, the 1,2-PD-specific bacterial microcompartment (BMC) concentrates low levels of 1,2-PD catabolic enzymes, concentrates volatile reaction intermediates thus enhancing pathway flux and keeps the level of toxic, mutagenic propionaldehyde low. The sequence is that of Propanediol dehydratase medium subunit from Citrobacter freundii.